A 98-amino-acid polypeptide reads, in one-letter code: Derivative of benzaldehyde biosynthesis cluster protein C (98 aa).

It belongs to the YciI family.

Its pathway is secondary metabolite biosynthesis. Its function is as follows. Part of the gene cluster that mediates the biosynthesis of the antibiotic 2,4-dihydroxy-3-methyl-6-(2-oxopropyl)benzaldehyde (DHMBA) and its derivatives. The direct non-reducing polyketide synthase dbaI product is 2,4-dihydroxy-3-methyl-6-(2-oxopropyl)benzaldehyde (DHMBA), produced by condensation of one acetyl-CoA starter unit with 4 malonyl-CoA units and one methylation step. The FAD-dependent monooxygenase dbaH is responsible for the synthesis of yellow pigments derived from the oxidation of DHMBA. The roles of dbaB, C, E and F have still to be determined. The chain is Derivative of benzaldehyde biosynthesis cluster protein C from Emericella nidulans (strain FGSC A4 / ATCC 38163 / CBS 112.46 / NRRL 194 / M139) (Aspergillus nidulans).